A 713-amino-acid polypeptide reads, in one-letter code: Elongation factor G (713 aa).

The 283-residue stretch at 8 to 290 folds into the tr-type G domain; sequence ERYRNFGIMA…GVIQLLPSPV (283 aa). Residues 17–24, 88–92, and 142–145 contribute to the GTP site; these read AHIDAGKT, DTPGH, and NKMD.

Belongs to the TRAFAC class translation factor GTPase superfamily. Classic translation factor GTPase family. EF-G/EF-2 subfamily.

It localises to the cytoplasm. Its function is as follows. Catalyzes the GTP-dependent ribosomal translocation step during translation elongation. During this step, the ribosome changes from the pre-translocational (PRE) to the post-translocational (POST) state as the newly formed A-site-bound peptidyl-tRNA and P-site-bound deacylated tRNA move to the P and E sites, respectively. Catalyzes the coordinated movement of the two tRNA molecules, the mRNA and conformational changes in the ribosome. In Stenotrophomonas maltophilia (strain K279a), this protein is Elongation factor G.